Consider the following 219-residue polypeptide: Large ribosomal subunit protein uL1 (219 aa).

It belongs to the universal ribosomal protein uL1 family. In terms of assembly, component of the large ribosomal subunit.

It localises to the cytoplasm. The sequence is that of Large ribosomal subunit protein uL1 (RPL1) from Encephalitozoon cuniculi (strain GB-M1) (Microsporidian parasite).